The following is a 779-amino-acid chain: MNNKILEQLEFNKVKELILPYLKTEQSQEELSELEPMTEAPKIEKSFNEISDMEQIFVEHHSFGIVSLSSISESLKRLELSADLNIQELLAIKKVLQSSSDMIHFYSDLDNVSFQSLDRLFENLEQFPNLQGSFQAINDGGFLEHFASPELERIRRQLTNSERRVRQILQDMLKEKAELLSENLIASRSGRSVLPVKNTYRNRISGVVHDISSSGSTVYIEPRAVVTLNEEITQLRADERHEESRILHAFSDLLRPHVATIRNNAWILGHLDFVRAKYLFMSDNKATIPEISNDSTLALINVRHPLLSNPVANDLHFDQDLTAIVITGPNTGGKTIMLKTLGLAQLMGQSGLPVLADKGSKIAVFNNIFADIGDEQSIEQSLSTFSSHMTHIVSILNEADHNSLVLFDELGAGTDPQEGASLAMAILEHLRLSNIKTMATTHYPELKAYGIETNFVENASMEFDAETLSPTYRFMQGVPGRSNAFEIASRLGLAPFIVKQAKQMTDSDSDVNRIIEQLEAQTLETRRRLDHIKEVEQENLKFNRAVKKLYNEFSHERDKELEKIYQEAQEIVDMALNESDTILKKLNDKSQLKPHEIIDAKAQIKKLAPQVDLSKNKVLNKAKKIKAARAPRIGDDIIVTSYGQRGTLTSQLKDGRWEAQVGIIKMTLTQDEFTLVRVQEEQKVKSKQINVVKKADSSGPRARLDLRGKRYEEAMQELDNFIDQALLNNMGQVDIIHGIGTGVIREGVTKYLRRNKHVKHFAYAPQNAGGSGATIVTLG.

328-335 (GPNTGGKT) provides a ligand contact to ATP. Residues 704-779 (LDLRGKRYEE…GSGATIVTLG (76 aa)) enclose the Smr domain.

It belongs to the DNA mismatch repair MutS family. MutS2 subfamily. In terms of assembly, homodimer. Binds to stalled ribosomes, contacting rRNA.

Functionally, endonuclease that is involved in the suppression of homologous recombination and thus may have a key role in the control of bacterial genetic diversity. Acts as a ribosome collision sensor, splitting the ribosome into its 2 subunits. Detects stalled/collided 70S ribosomes which it binds and splits by an ATP-hydrolysis driven conformational change. Acts upstream of the ribosome quality control system (RQC), a ribosome-associated complex that mediates the extraction of incompletely synthesized nascent chains from stalled ribosomes and their subsequent degradation. Probably generates substrates for RQC. The polypeptide is Endonuclease MutS2 (Streptococcus agalactiae serotype Ia (strain ATCC 27591 / A909 / CDC SS700)).